Here is a 329-residue protein sequence, read N- to C-terminus: PTS-dependent dihydroxyacetone kinase 1, dihydroxyacetone-binding subunit DhaK (329 aa).

The 323-residue stretch at 7-329 (GTDQVVEQMV…LKLPVDTIAW (323 aa)) folds into the DhaK domain. Dihydroxyacetone-binding positions include 53–56 (GSGH), lysine 104, and aspartate 109. Residue histidine 56 is the Proton acceptor of the active site. Residue histidine 218 is the Tele-hemiaminal-histidine intermediate of the active site.

In terms of assembly, homodimer. The dihydroxyacetone kinase complex is composed of a homodimer of DhaM, a homodimer of DhaK and the subunit DhaL.

The protein localises to the cytoplasm. The catalysed reaction is dihydroxyacetone + phosphoenolpyruvate = dihydroxyacetone phosphate + pyruvate. The protein operates within polyol metabolism; glycerol degradation. In terms of biological role, dihydroxyacetone binding subunit of the dihydroxyacetone kinase, which is responsible for the phosphoenolpyruvate (PEP)-dependent phosphorylation of dihydroxyacetone via a phosphoryl group transfer from DhaL-ATP. The protein is PTS-dependent dihydroxyacetone kinase 1, dihydroxyacetone-binding subunit DhaK of Listeria innocua serovar 6a (strain ATCC BAA-680 / CLIP 11262).